The chain runs to 537 residues: Probable E3 ubiquitin-protein ligase ARI3 (537 aa).

Residues 1–30 are disordered; sequence MDDDYMMLDDDYGEEEDENYSEDDNYSEAE. The interval 117–331 is TRIAD supradomain; sequence KTMKCDVCME…IAGHSCGRYK (215 aa). Zn(2+) contacts are provided by cysteine 121, cysteine 124, cysteine 139, histidine 141, cysteine 144, cysteine 147, cysteine 166, cysteine 171, cysteine 210, cysteine 216, cysteine 234, cysteine 236, cysteine 241, cysteine 244, histidine 249, cysteine 254, cysteine 281, and cysteine 284. An RING-type 1 zinc finger spans residues 121-171; the sequence is CDVCMEDDLPSNVMTRMECGHRFCNDCWIGHFTVKINEGESKRILCMAHEC. Residues 190–254 form an IBR-type zinc finger; sequence DRYDRFLIES…LSESHSPCSC (65 aa). An RING-type 2; atypical zinc finger spans residues 281–309; that stretch reads CPKCSKPIQKRDGCNLMTCKCGQHFCWLC. The active site involves cysteine 294. Zn(2+) is bound by residues cysteine 299, cysteine 301, cysteine 306, cysteine 309, histidine 317, and cysteine 327.

This sequence belongs to the RBR family. Ariadne subfamily. It depends on Zn(2+) as a cofactor. Ubiquitous.

It carries out the reaction [E2 ubiquitin-conjugating enzyme]-S-ubiquitinyl-L-cysteine + [acceptor protein]-L-lysine = [E2 ubiquitin-conjugating enzyme]-L-cysteine + [acceptor protein]-N(6)-ubiquitinyl-L-lysine.. It functions in the pathway protein modification; protein ubiquitination. In terms of biological role, might act as an E3 ubiquitin-protein ligase, or as part of E3 complex, which accepts ubiquitin from specific E2 ubiquitin-conjugating enzymes and then transfers it to substrates. The protein is Probable E3 ubiquitin-protein ligase ARI3 (ARI3) of Arabidopsis thaliana (Mouse-ear cress).